The sequence spans 398 residues: 1-deoxy-D-xylulose 5-phosphate reductoisomerase (398 aa).

Residues Thr11, Gly12, Ser13, Ile14, and Asn125 each contribute to the NADPH site. A 1-deoxy-D-xylulose 5-phosphate-binding site is contributed by Lys126. Glu127 serves as a coordination point for NADPH. A Mn(2+)-binding site is contributed by Asp151. Ser152, Glu153, Ser186, and His209 together coordinate 1-deoxy-D-xylulose 5-phosphate. Mn(2+) is bound at residue Glu153. Residue Gly215 participates in NADPH binding. 1-deoxy-D-xylulose 5-phosphate-binding residues include Ser222, Asn227, Lys228, and Glu231. Glu231 is a Mn(2+) binding site.

It belongs to the DXR family. Mg(2+) serves as cofactor. The cofactor is Mn(2+).

It carries out the reaction 2-C-methyl-D-erythritol 4-phosphate + NADP(+) = 1-deoxy-D-xylulose 5-phosphate + NADPH + H(+). It functions in the pathway isoprenoid biosynthesis; isopentenyl diphosphate biosynthesis via DXP pathway; isopentenyl diphosphate from 1-deoxy-D-xylulose 5-phosphate: step 1/6. In terms of biological role, catalyzes the NADPH-dependent rearrangement and reduction of 1-deoxy-D-xylulose-5-phosphate (DXP) to 2-C-methyl-D-erythritol 4-phosphate (MEP). This Acinetobacter baumannii (strain ACICU) protein is 1-deoxy-D-xylulose 5-phosphate reductoisomerase.